We begin with the raw amino-acid sequence, 423 residues long: Cyclin-B2-1 (423 aa).

The interval 1 to 61 is disordered; it reads MDRASENRRL…EKSGKEEQKP (61 aa). Residues 49-60 show a composition bias toward basic and acidic residues; sequence PMLEKSGKEEQK.

The protein belongs to the cyclin family. Cyclin AB subfamily. As to quaternary structure, interacts with CDKB2-1. In terms of tissue distribution, expressed in the intercalary meristem and the elongation zone of internodes. Expressed in adventitious roots at all nodes under submergence conditions.

Functionally, involved in the control of the cell cycle at the G2/M (mitosis) transition. May activate CDKB2-1 kinase. The polypeptide is Cyclin-B2-1 (CYCB2-1) (Oryza sativa subsp. indica (Rice)).